A 117-amino-acid chain; its full sequence is Venom nerve growth factor (117 aa).

3 disulfides stabilise this stretch: Cys-12–Cys-77, Cys-55–Cys-105, and Cys-65–Cys-107. Asn-21 carries N-linked (GlcNAc...) asparagine glycosylation.

The protein belongs to the NGF-beta family. As to quaternary structure, homodimer; non-covalently linked. As to expression, expressed by the venom gland.

It is found in the secreted. In terms of biological role, nerve growth factor is important for the development and maintenance of the sympathetic and sensory nervous systems. It stimulates division and differentiation of sympathetic and embryonic sensory neurons as well as basal forebrain cholinergic neurons in the brain. Its relevance in the snake venom is not clear. However, it has been shown to inhibit metalloproteinase-dependent proteolysis of platelet glycoprotein Ib alpha, suggesting a metalloproteinase inhibition to prevent metalloprotease autodigestion and/or protection against prey proteases. Binds a lipid between the two protein chains in the homodimer. The lipid-bound form promotes histamine relase from mouse mast cells, contrary to the lipid-free form. The sequence is that of Venom nerve growth factor from Daboia russelii (Russel's viper).